Here is an 860-residue protein sequence, read N- to C-terminus: MMSIKAFTLVSAVERELLMGDKERVNIECVECCGRDLYVGTNDCFVYHFLLEERPVPAGPATFTATKQLQRHLGFKKPVNELRAASALNRLLVLCDNSISLVNMLNLEPVPSGARIKGAATFALNENPVSGDPFCVEVCIISVKRRTIQMFLVYEDRVQIVKEVSTAEQPLAVAVDGHFLCLALTTQYIIHNYSTGVSQDLFPYCSEERPPIVKRIGRQEFLLAGPGGLGMFATVAGISQRAPVHWSENVIGAAVSFPYVIALDDEFITVHSMLDQQQKQTLPFKEGHILQDFEGRVIVATSKGVYILVPLPLEKQIQDLLASRRVEEALVLAKGARRNIPKEKFQVMYRRILQQAGFIQFAQLQFLEAKELFRSGQLDVRELISLYPFLLPTSSSFTRSHPPLHEYADLNQLTQGDQEKMAKCKRFLMSYLNEVRSTEVANGYKEDIDTALLKLYAEADHDSLLDLLVTENFCLLTDSAAWLEKHKKYFALGLLYHYNNQDAAAVQLWVNIVNGDVQDSTRSDLYEYIVDFLTYCLDEELVWAYADWVLQKSEEVGVQVFTKRPLDEQQKNSFNPDDIINCLKKYPKALVKYLEHLVIDKRLQKEEYHTHLAVLYLEEVLLQRASASGKGAEATETQAKLRRLLQKSDLYRVHFLLERLQGAGLPMESAILHGKLGEHEKALHILVHELQDFAAAEDYCLWCSEGRDPPHRQQLFHTLLAIYLHAGPTAHELAVAAVDLLNRHATEFDAAQVLQMLPDTWSVQLLCPFLMGAMRDSIHARRTMQVALGLARSENLIYTYDKMKLKGSSIQLSDKKLCQICQNPFCEPVFVRYPNGGLVHTHCAASRHTNPSSSSPGTRT.

The 274-residue stretch at 24–297 (RVNIECVECC…HILQDFEGRV (274 aa)) folds into the CNH domain. Residues 564 to 728 (RPLDEQQKNS…LLAIYLHAGP (165 aa)) form a CHCR repeat.

The protein belongs to the TRAP1 family. Interacts with TGFBR2 and ACVR2B; in the absence of ligand stimulation. Interacts with TGFBR1, ACVRL1, BMPR1A and ACVR1B; in the absence of ligand stimulation and to a less extent. Interacts with SMAD4; the interaction seems to be mutually exclusive with the interaction of SMAD4 and phosphorylated SMAD2. May interact with ALOX5. Interacts with RAB5C. Interacts with VPS8, VPS11 and VPS16. Component of the putative class C core vacuole/endosome tethering (CORVET) complex; the core of which composed of the class C Vps proteins VPS11, VPS16, VPS18 and VPS33A, is associated with VPS8 and TGFBRAP1.

It is found in the cytoplasm. It localises to the early endosome. Plays a role in the TGF-beta/activin signaling pathway. It associates with inactive heteromeric TGF-beta and activin receptor complexes, mainly through the type II receptor, and is released upon activation of signaling. May recruit SMAD4 to the vicinity of the receptor complex and facilitate its interaction with receptor-regulated Smads, such as SMAD2. Functionally, plays a role in vesicle-mediated protein trafficking of the endocytic membrane transport pathway. Believed to act as a component of the putative CORVET endosomal tethering complexes which is proposed to be involved in the Rab5-to-Rab7 endosome conversion probably implicating MON1A/B, and via binding SNAREs and SNARE complexes to mediate tethering and docking events during SNARE-mediated membrane fusion. The CORVET complex is proposed to function as a Rab5 effector to mediate early endosome fusion probably in specific endosome subpopulations. Functions predominantly in APPL1-containing endosomes and in degradative but not recycling trafficking of endocytosed cargo. The polypeptide is Transforming growth factor-beta receptor-associated protein 1 (TGFBRAP1) (Homo sapiens (Human)).